The primary structure comprises 198 residues: FMN-dependent NADH:quinone oxidoreductase (198 aa).

Residues Ser10, 16-18 (SQS), 94-97 (MYNF), and 138-141 (TRGG) contribute to the FMN site.

The protein belongs to the azoreductase type 1 family. In terms of assembly, homodimer. Requires FMN as cofactor.

The catalysed reaction is 2 a quinone + NADH + H(+) = 2 a 1,4-benzosemiquinone + NAD(+). It catalyses the reaction N,N-dimethyl-1,4-phenylenediamine + anthranilate + 2 NAD(+) = 2-(4-dimethylaminophenyl)diazenylbenzoate + 2 NADH + 2 H(+). Its function is as follows. Quinone reductase that provides resistance to thiol-specific stress caused by electrophilic quinones. In terms of biological role, also exhibits azoreductase activity. Catalyzes the reductive cleavage of the azo bond in aromatic azo compounds to the corresponding amines. This Shewanella baltica (strain OS195) protein is FMN-dependent NADH:quinone oxidoreductase.